We begin with the raw amino-acid sequence, 547 residues long: Protein RBL (547 aa).

WD repeat units follow at residues 21–60 (LEHG…IAKE), 65–104 (DCSA…KIAR), 214–253 (SGAA…KNVL), 285–332 (EFQD…VKIL), and 334–373 (GPKE…NWSA). Residues 466–547 (SPASEEAGQN…GGDDDDDAYY (82 aa)) are disordered. Residues 499–511 (SEKAMELQAEKAK) are compositionally biased toward basic and acidic residues. Positions 530-547 (QETDDSINGGDDDDDAYY) are enriched in acidic residues.

In terms of assembly, part of a complex composed of TRO, RBL and WDR5A. Interacts with TRO and WDR5A, but not with WDR5B. This complex is formed during both vegetative and reproductive development. In terms of tissue distribution, strongly expressed in root tips, shoot apices, vascular tissues, developing embryos and endosperms.

It localises to the nucleus. In terms of biological role, promotes the expression of FLC and FLC homologs to repress the floral transition. Promotes WRKY70 and LTP7 genes epigenetic methylation (e.g. H3K4me3) and subsequent expression. In Arabidopsis thaliana (Mouse-ear cress), this protein is Protein RBL.